The following is a 1204-amino-acid chain: E3 ubiquitin-protein ligase DZIP3 (1204 aa).

Disordered stretches follow at residues 1 to 22 and 640 to 681; these read MDSL…QTKE and SIPS…EQVS. Positions 649-658 are enriched in basic and acidic residues; the sequence is SVKDLQEVKS. The segment covering 659 to 668 has biased composition (basic residues); that stretch reads KTKKKKRTKS. Coiled-coil stretches lie at residues 746-861 and 906-941; these read KETE…TSRA and QLKA…KVKQ. Basic and acidic residues predominate over residues 1088-1098; that stretch reads PKKSESEEKSA. Residues 1088–1141 are disordered; that stretch reads PKKSESEEKSAQDGNNASPSHTASQPNAPQDPKSAQGSATWEGDKDMDNEEEEE. A compositionally biased stretch (polar residues) spans 1099-1126; that stretch reads QDGNNASPSHTASQPNAPQDPKSAQGSA. Positions 1132 to 1141 are enriched in acidic residues; it reads KDMDNEEEEE. The RING-type; atypical zinc finger occupies 1144 to 1184; the sequence is CVICHENLSPENLSVLPCAHKFHSQCIRPWLMQQGTCPTCR.

As to quaternary structure, probably interacts with DAZL.

Its subcellular location is the cytoplasm. It carries out the reaction S-ubiquitinyl-[E2 ubiquitin-conjugating enzyme]-L-cysteine + [acceptor protein]-L-lysine = [E2 ubiquitin-conjugating enzyme]-L-cysteine + N(6)-ubiquitinyl-[acceptor protein]-L-lysine.. Its pathway is protein modification; protein ubiquitination. Functionally, E3 Ubiquitin ligase proteins mediate ubiquitination and subsequent proteasomal degradation of target proteins. E3 ubiquitin ligases accept ubiquitin from an E2 ubiquitin-conjugating enzyme in the form of a thioester and then directly transfers the ubiquitin to targeted substrates. Able to specifically bind RNA. This chain is E3 ubiquitin-protein ligase DZIP3 (Dzip3), found in Mus musculus (Mouse).